Here is a 258-residue protein sequence, read N- to C-terminus: Imidazole glycerol phosphate synthase subunit HisF (258 aa).

Residues aspartate 11 and aspartate 130 contribute to the active site.

Belongs to the HisA/HisF family. In terms of assembly, heterodimer of HisH and HisF.

The protein resides in the cytoplasm. It carries out the reaction 5-[(5-phospho-1-deoxy-D-ribulos-1-ylimino)methylamino]-1-(5-phospho-beta-D-ribosyl)imidazole-4-carboxamide + L-glutamine = D-erythro-1-(imidazol-4-yl)glycerol 3-phosphate + 5-amino-1-(5-phospho-beta-D-ribosyl)imidazole-4-carboxamide + L-glutamate + H(+). It functions in the pathway amino-acid biosynthesis; L-histidine biosynthesis; L-histidine from 5-phospho-alpha-D-ribose 1-diphosphate: step 5/9. In terms of biological role, IGPS catalyzes the conversion of PRFAR and glutamine to IGP, AICAR and glutamate. The HisF subunit catalyzes the cyclization activity that produces IGP and AICAR from PRFAR using the ammonia provided by the HisH subunit. This Azorhizobium caulinodans (strain ATCC 43989 / DSM 5975 / JCM 20966 / LMG 6465 / NBRC 14845 / NCIMB 13405 / ORS 571) protein is Imidazole glycerol phosphate synthase subunit HisF.